The following is a 244-amino-acid chain: 1-(5-phosphoribosyl)-5-[(5-phosphoribosylamino)methylideneamino] imidazole-4-carboxamide isomerase (244 aa).

Catalysis depends on Asp-9, which acts as the Proton acceptor. Asp-131 (proton donor) is an active-site residue.

This sequence belongs to the HisA/HisF family.

It localises to the cytoplasm. It carries out the reaction 1-(5-phospho-beta-D-ribosyl)-5-[(5-phospho-beta-D-ribosylamino)methylideneamino]imidazole-4-carboxamide = 5-[(5-phospho-1-deoxy-D-ribulos-1-ylimino)methylamino]-1-(5-phospho-beta-D-ribosyl)imidazole-4-carboxamide. It participates in amino-acid biosynthesis; L-histidine biosynthesis; L-histidine from 5-phospho-alpha-D-ribose 1-diphosphate: step 4/9. The sequence is that of 1-(5-phosphoribosyl)-5-[(5-phosphoribosylamino)methylideneamino] imidazole-4-carboxamide isomerase from Campylobacter jejuni subsp. doylei (strain ATCC BAA-1458 / RM4099 / 269.97).